The primary structure comprises 199 residues: Peroxiredoxin-1 (199 aa).

N-acetylserine is present on Ser-2. In terms of domain architecture, Thioredoxin spans 6-165; that stretch reads AKIGYPAPNF…ILRLVQAFQF (160 aa). Lys-7 carries the post-translational modification N6-acetyllysine; alternate. Lys-7 participates in a covalent cross-link: Glycyl lysine isopeptide (Lys-Gly) (interchain with G-Cter in SUMO2); alternate. The residue at position 16 (Lys-16) is an N6-acetyllysine. Position 32 is a phosphoserine (Ser-32). The active-site Cysteine sulfenic acid (-SOH) intermediate is Cys-52. At Thr-90 the chain carries Phosphothreonine. Lys-120 participates in a covalent cross-link: Glycyl lysine isopeptide (Lys-Gly) (interchain with G-Cter in SUMO2). Lys-136 is subject to N6-acetyllysine. The tract at residues 176 to 199 is disordered; sequence GWKPGSDTIKPDVQKSKEYFSKQK. A compositionally biased stretch (basic and acidic residues) spans 184–199; that stretch reads IKPDVQKSKEYFSKQK. Lys-185 is covalently cross-linked (Glycyl lysine isopeptide (Lys-Gly) (interchain with G-Cter in SUMO1)). An N6-acetyllysine modification is found at Lys-197.

This sequence belongs to the peroxiredoxin family. AhpC/Prx1 subfamily. In terms of assembly, homodimer; disulfide-linked, upon oxidation. 5 homodimers assemble to form a ring-like decamer. Interacts with GDPD5; forms a mixed-disulfide with GDPD5. Interacts with SESN1 and SESN2. Interacts with FAM107A. Phosphorylated on Thr-90 during the M-phase, which leads to a decrease in enzymatic activity. Post-translationally, acetylation increases reducing activity and resistance to superoxidation. Deacetylated by HDAC6 which decreases reducing activity.

Its subcellular location is the cytoplasm. It catalyses the reaction a hydroperoxide + [thioredoxin]-dithiol = an alcohol + [thioredoxin]-disulfide + H2O. Thiol-specific peroxidase that catalyzes the reduction of hydrogen peroxide and organic hydroperoxides to water and alcohols, respectively. Plays a role in cell protection against oxidative stress by detoxifying peroxides and as sensor of hydrogen peroxide-mediated signaling events. Might participate in the signaling cascades of growth factors and tumor necrosis factor-alpha by regulating the intracellular concentrations of H(2)O(2). Reduces an intramolecular disulfide bond in GDPD5 that gates the ability to GDPD5 to drive postmitotic motor neuron differentiation. The sequence is that of Peroxiredoxin-1 (PRDX1) from Cricetulus griseus (Chinese hamster).